A 413-amino-acid chain; its full sequence is Arginine biosynthesis bifunctional protein ArgJ 1 (413 aa).

T154, K180, T191, E277, N408, and T413 together coordinate substrate. T191 acts as the Nucleophile in catalysis.

Belongs to the ArgJ family. As to quaternary structure, heterotetramer of two alpha and two beta chains.

The protein localises to the cytoplasm. The catalysed reaction is N(2)-acetyl-L-ornithine + L-glutamate = N-acetyl-L-glutamate + L-ornithine. It carries out the reaction L-glutamate + acetyl-CoA = N-acetyl-L-glutamate + CoA + H(+). The protein operates within amino-acid biosynthesis; L-arginine biosynthesis; L-ornithine and N-acetyl-L-glutamate from L-glutamate and N(2)-acetyl-L-ornithine (cyclic): step 1/1. It participates in amino-acid biosynthesis; L-arginine biosynthesis; N(2)-acetyl-L-ornithine from L-glutamate: step 1/4. Catalyzes two activities which are involved in the cyclic version of arginine biosynthesis: the synthesis of N-acetylglutamate from glutamate and acetyl-CoA as the acetyl donor, and of ornithine by transacetylation between N(2)-acetylornithine and glutamate. The sequence is that of Arginine biosynthesis bifunctional protein ArgJ 1 from Nostoc sp. (strain PCC 7120 / SAG 25.82 / UTEX 2576).